Here is an 894-residue protein sequence, read N- to C-terminus: Histone-lysine N-methyltransferase PRDM9 (894 aa).

2 disordered regions span residues 1-23 (MSPEKSQEESPEEDTERTERKPM) and 143-174 (SGSEQAQKPVSPSGEASTSGQHSRLKLELRKK). Positions 23 to 86 (MVKDAFKDIS…RRQAIKLQVD (64 aa)) constitute a KRAB-related domain. Residues 143–164 (SGSEQAQKPVSPSGEASTSGQH) are compositionally biased toward polar residues. Zn(2+) contacts are provided by Cys-205, Cys-208, Cys-216, and His-219. Residues 244-358 (PGLRIGPSGI…PGCELLVWYG (115 aa)) enclose the SET domain. Residues 256 to 258 (AGL), Tyr-291, and 320 to 321 (NC) contribute to the S-adenosyl-L-methionine site. 288–294 (NNGYSWL) lines the substrate pocket. Residue Tyr-357 coordinates substrate. Lys-368 bears the N6,N6,N6-trimethyllysine; alternate mark. Lys-368 carries the N6-methyllysine; alternate modification. Residues Lys-372 and Lys-374 each carry the N6-methyllysine modification. A C2H2-type 1 zinc finger spans residues 388-411 (HPCPSCCLAFSSQKFLSQHVERNH). The Zn(2+) site is built by Cys-390, Cys-393, His-406, and His-411. The disordered stretch occupies residues 408–469 (ERNHSSQNFP…SKLLNKRTWQ (62 aa)). Over residues 444 to 461 (PHSRNDKTKGQEIKERSK) the composition is skewed to basic and acidic residues. The C2H2-type 2; degenerate zinc-finger motif lies at 524–546 (VKYGECGQGFSVKSDVITHQRTH). 12 C2H2-type zinc fingers span residues 552–574 (YVCRECGRGFSWKSHLLIHQRIH), 580–602 (YVCRECGRGFSWQSVLLTHQRTH), 608–630 (YVCRECGRGFSRQSVLLTHQRRH), 636–658 (YVCRECGRGFSRQSVLLTHQRRH), 664–686 (YVCRECGRGFSWQSVLLTHQRTH), 692–714 (YVCRECGRGFSWQSVLLTHQRTH), 720–742 (YVCRECGRGFSNKSHLLRHQRTH), 748–770 (YVCRECGRGFRDKSHLLRHQRTH), 776–798 (YVCRECGRGFRDKSNLLSHQRTH), 804–826 (YVCRECGRGFSNKSHLLRHQRTH), 832–854 (YVCRECGRGFRNKSHLLRHQRTH), and 860–882 (YVCRECGRGFSDRSSLCYHQRTH). Positions 722, 725, 738, 742, 750, 753, 766, 770, 778, 781, 794, 798, 806, 809, 822, and 826 each coordinate Zn(2+). A DNA-binding region spans residues 730-820 (SNKSHLLRHQ…RGFSNKSHLL (91 aa)).

Belongs to the class V-like SAM-binding methyltransferase superfamily. Homodimer. Interacts with EHMT2 and CDYL; interaction only takes place when PRDM9 is bound to hotspot DNA. Interacts with CXXC1; this interaction does not link PRDM9-activated recombination hotspot sites with DSB machinery and is not required for the hotspot recognition pathway. Forms a complex with EWSR1, REC8, SYCP3 and SYCP1; complex formation is dependent of phosphorylated form of REC8 and requires PRDM9 bound to hotspot DNA; EWSR1 joins PRDM9 with the chromosomal axis through REC8. Post-translationally, mono-methylated; automethylated. Tri-methylated; automethylated. Mono-methylation is predominant; automethylation is lower and slower than H3 peptide methylation and is in a highest S-adenosyl-L-methionine concentration-dependent. There are two major sites for automethylation at Lys-368 and Lys-374. Lysines can be simultaneously methylated, such as Lys-368(me3)/Lys-372(me1), Lys-368(me1)/Lys-374(me1) and Lys-368(me1)/Lys-372(me1)/Lys-374(me1). Automethylation is an intramolecular (cis) process.

It is found in the nucleus. It localises to the chromosome. The enzyme catalyses L-lysyl-[protein] + S-adenosyl-L-methionine = N(6)-methyl-L-lysyl-[protein] + S-adenosyl-L-homocysteine + H(+). The catalysed reaction is N(6)-methyl-L-lysyl-[protein] + S-adenosyl-L-methionine = N(6),N(6)-dimethyl-L-lysyl-[protein] + S-adenosyl-L-homocysteine + H(+). It catalyses the reaction L-lysyl(4)-[histone H3] + 3 S-adenosyl-L-methionine = N(6),N(6),N(6)-trimethyl-L-lysyl(4)-[histone H3] + 3 S-adenosyl-L-homocysteine + 3 H(+). It carries out the reaction L-lysyl(36)-[histone H3] + 3 S-adenosyl-L-methionine = N(6),N(6),N(6)-trimethyl-L-lysyl(36)-[histone H3] + 3 S-adenosyl-L-homocysteine + 3 H(+). The enzyme catalyses L-lysyl(9)-[histone H3] + 3 S-adenosyl-L-methionine = N(6),N(6),N(6)-trimethyl-L-lysyl(9)-[histone H3] + 3 S-adenosyl-L-homocysteine + 3 H(+). The catalysed reaction is L-lysyl(20)-[histone H4] + S-adenosyl-L-methionine = N(6)-methyl-L-lysyl(20)-[histone H4] + S-adenosyl-L-homocysteine + H(+). It catalyses the reaction N(6)-methyl-L-lysyl(20)-[histone H4] + S-adenosyl-L-methionine = N(6),N(6)-dimethyl-L-lysyl(20)-[histone H4] + S-adenosyl-L-homocysteine + H(+). Its activity is regulated as follows. Inhibited by suramin with an IC(50) of 4.1 uM. In terms of biological role, histone methyltransferase that sequentially mono-, di-, and tri-methylates both 'Lys-4' (H3K4) and 'Lys-36' (H3K36) of histone H3 to produce respectively trimethylated 'Lys-4' (H3K4me3) and trimethylated 'Lys-36' (H3K36me3) histone H3 and plays a key role in meiotic prophase by determining hotspot localization thereby promoting meiotic recombination. Can also methylate all four core histones with H3 being the best substrate and the most highly modified. Is also able, on one hand, to mono and di-methylate H4K20 and on other hand to trimethylate H3K9 with the di-methylated H3K9 as the best substrate. During meiotic prophase, binds specific DNA sequences through its zinc finger domains thereby determining hotspot localization where it promotes local H3K4me3 and H3K36me3 enrichment on the same nucleosomes through its histone methyltransferase activity. Thereby promotes double-stranded breaks (DSB) formation, at this subset of PRDM9-binding sites, that initiates meiotic recombination for the proper meiotic progression. During meiotic progression hotspot-bound PRDM9 interacts with several complexes; in early leptonema binds CDYL and EHMT2 followed by EWSR1 and CXXC1 by the end of leptonema. EWSR1 joins PRDM9 with the chromosomal axis through REC8. In this way, controls the DSB repair pathway, pairing of homologous chromosomes and sex body formation. Moreover plays a central role in the transcriptional activation of genes during early meiotic prophase thanks to H3K4me3 and H3K36me3 enrichment that represents a specific tag for epigenetic transcriptional activation. In addition performs automethylation. Acetylation and phosphorylation of histone H3 attenuate or prevent histone H3 methylation. This Homo sapiens (Human) protein is Histone-lysine N-methyltransferase PRDM9.